A 589-amino-acid chain; its full sequence is tRNA (guanine(26)-N(2))-dimethyltransferase 2 (589 aa).

The region spanning 9-465 is the Trm1 methyltransferase domain; it reads TVIKEGEAEI…APMEVIWDIM (457 aa). R36 is a binding site for S-adenosyl-L-methionine. The tract at residues 51–122 is disordered; the sequence is KQEHEAKSSK…RFAPREPKPP (72 aa). Basic and acidic residues-rich tracts occupy residues 68–81 and 106–122; these read VIEK…KEET and DPAK…PKPP. S-adenosyl-L-methionine is bound by residues R134, D152, and V185. Residues C315, C318, C350, and C353 each coordinate Zn(2+). The tract at residues 550 to 589 is disordered; it reads LSQHHEELKEEDEEAEPEDNVQDKVDPKRQKTATDNITST. Residues 558 to 569 are compositionally biased toward acidic residues; sequence KEEDEEAEPEDN.

This sequence belongs to the class I-like SAM-binding methyltransferase superfamily. Trm1 family.

The enzyme catalyses guanosine(26) in tRNA + 2 S-adenosyl-L-methionine = N(2)-dimethylguanosine(26) in tRNA + 2 S-adenosyl-L-homocysteine + 2 H(+). In terms of biological role, dimethylates a single guanine residue at position 26 of most tRNAs using S-adenosyl-L-methionine as donor of the methyl groups. The polypeptide is tRNA (guanine(26)-N(2))-dimethyltransferase 2 (Arabidopsis thaliana (Mouse-ear cress)).